A 115-amino-acid chain; its full sequence is Large ribosomal subunit protein uL18 (115 aa).

The protein belongs to the universal ribosomal protein uL18 family. In terms of assembly, part of the 50S ribosomal subunit; part of the 5S rRNA/L5/L18/L25 subcomplex. Contacts the 5S and 23S rRNAs.

Its function is as follows. This is one of the proteins that bind and probably mediate the attachment of the 5S RNA into the large ribosomal subunit, where it forms part of the central protuberance. This is Large ribosomal subunit protein uL18 from Marinobacter nauticus (strain ATCC 700491 / DSM 11845 / VT8) (Marinobacter aquaeolei).